A 372-amino-acid polypeptide reads, in one-letter code: L-selectin (372 aa).

The N-terminal stretch at 1–28 (MIFPWKCQSTQRDLWNIFKLWGWTMLCC) is a signal peptide. Positions 29–38 (DFLAHHGTDC) are excised as a propeptide. At 39 to 332 (WTYHYSEKPM…FSMIKEGDYN (294 aa)) the chain is on the extracellular side. A C-type lectin domain is found at 55–155 (RFCRDNYTDL…ACHKLKAALC (101 aa)). 10 disulfides stabilise this stretch: cysteine 57-cysteine 155, cysteine 128-cysteine 147, cysteine 128-cysteine 160, cysteine 160-cysteine 171, cysteine 165-cysteine 180, cysteine 182-cysteine 191, cysteine 197-cysteine 241, cysteine 227-cysteine 254, cysteine 259-cysteine 303, and cysteine 289-cysteine 316. 2 N-linked (GlcNAc...) asparagine glycosylation sites follow: asparagine 60 and asparagine 104. 5 residues coordinate Ca(2+): glutamate 118, asparagine 120, glutamate 126, asparagine 143, and aspartate 144. Positions 156–192 (YTASCQPWSCSGHGECVEIINNYTCNCDVGYYGPQCQ) constitute an EGF-like domain. An N-linked (GlcNAc...) asparagine glycan is attached at asparagine 177. Sushi domains are found at residues 195-256 (IQCE…TCQV) and 257-318 (IQCE…ICQK). 4 N-linked (GlcNAc...) asparagine glycosylation sites follow: asparagine 216, asparagine 232, asparagine 246, and asparagine 271. Residues 333–355 (PLFIPVAVMVTAFSGLAFIIWLA) traverse the membrane as a helical segment. The Cytoplasmic segment spans residues 356 to 372 (RRLKKGKKSKRSMDDPY).

The protein belongs to the selectin/LECAM family. Interaction with SELPLG/PSGL1 and PODXL2 is required for promoting recruitment and rolling of leukocytes. This interaction is dependent on the sialyl Lewis X glycan modification of SELPLG and PODXL2, and tyrosine sulfation modifications of SELPLG. Sulfation on 'Tyr-51' of SELPLG is important for L-selectin binding. Post-translationally, N-glycosylated.

Its subcellular location is the cell membrane. In terms of biological role, calcium-dependent lectin that mediates cell adhesion by binding to glycoproteins on neighboring cells. Mediates the adherence of lymphocytes to endothelial cells of high endothelial venules in peripheral lymph nodes. Promotes initial tethering and rolling of leukocytes in endothelia. The chain is L-selectin (SELL) from Pan troglodytes (Chimpanzee).